The following is a 93-amino-acid chain: Small ribosomal subunit protein uS19 (93 aa).

It belongs to the universal ribosomal protein uS19 family.

In terms of biological role, protein S19 forms a complex with S13 that binds strongly to the 16S ribosomal RNA. This chain is Small ribosomal subunit protein uS19, found in Campylobacter jejuni subsp. jejuni serotype O:6 (strain 81116 / NCTC 11828).